A 165-amino-acid polypeptide reads, in one-letter code: Nucleotide-binding protein PMM0481 (165 aa).

This sequence belongs to the YajQ family.

Nucleotide-binding protein. In Prochlorococcus marinus subsp. pastoris (strain CCMP1986 / NIES-2087 / MED4), this protein is Nucleotide-binding protein PMM0481.